The sequence spans 450 residues: Casein kinase 1-like protein 1 (450 aa).

The Protein kinase domain maps to 9 to 278 (FRLGRKIGSG…LKRIFRDLFI (270 aa)). Residues 15–23 (IGSGSFGEI) and lysine 38 contribute to the ATP site. Residue aspartate 128 is the Proton acceptor of the active site. The tract at residues 311–450 (AVGTSAALPP…LQVSDEHHPH (140 aa)) is disordered. Residues 328-342 (YTGEEEGRPHMESSR) are compositionally biased toward basic and acidic residues. Residues 349-365 (LDNSGNISNQPTSSSAR) show a composition bias toward polar residues. Over residues 371 to 382 (SSSLFAQSAGSS) the composition is skewed to low complexity.

Belongs to the protein kinase superfamily. CK1 Ser/Thr protein kinase family. Casein kinase I subfamily. Monomer. Post-translationally, autophosphorylated. Expressed in flowers.

Its subcellular location is the cytoplasm. It localises to the cell junction. The protein resides in the plasmodesma. It carries out the reaction L-seryl-[protein] + ATP = O-phospho-L-seryl-[protein] + ADP + H(+). The catalysed reaction is L-threonyl-[protein] + ATP = O-phospho-L-threonyl-[protein] + ADP + H(+). In terms of biological role, casein kinases are operationally defined by their preferential utilization of acidic proteins such as caseins as substrates. It can phosphorylate a large number of proteins. This Arabidopsis thaliana (Mouse-ear cress) protein is Casein kinase 1-like protein 1.